The primary structure comprises 139 residues: NADPH-dependent 7-cyano-7-deazaguanine reductase (139 aa).

C34 serves as the catalytic Thioimide intermediate. Residue D41 is the Proton donor of the active site. Substrate contacts are provided by residues 56–58 (VEL) and 75–76 (HE).

It belongs to the GTP cyclohydrolase I family. QueF type 1 subfamily.

Its subcellular location is the cytoplasm. The catalysed reaction is 7-aminomethyl-7-carbaguanine + 2 NADP(+) = 7-cyano-7-deazaguanine + 2 NADPH + 3 H(+). The protein operates within tRNA modification; tRNA-queuosine biosynthesis. Catalyzes the NADPH-dependent reduction of 7-cyano-7-deazaguanine (preQ0) to 7-aminomethyl-7-deazaguanine (preQ1). The polypeptide is NADPH-dependent 7-cyano-7-deazaguanine reductase (Methylobacillus flagellatus (strain ATCC 51484 / DSM 6875 / VKM B-1610 / KT)).